Reading from the N-terminus, the 264-residue chain is tRNA (guanine-N(1)-)-methyltransferase (264 aa).

S-adenosyl-L-methionine contacts are provided by residues Gly-125 and 145–150 (LGDFVL).

It belongs to the RNA methyltransferase TrmD family. Homodimer.

Its subcellular location is the cytoplasm. It carries out the reaction guanosine(37) in tRNA + S-adenosyl-L-methionine = N(1)-methylguanosine(37) in tRNA + S-adenosyl-L-homocysteine + H(+). Specifically methylates guanosine-37 in various tRNAs. The protein is tRNA (guanine-N(1)-)-methyltransferase of Burkholderia lata (strain ATCC 17760 / DSM 23089 / LMG 22485 / NCIMB 9086 / R18194 / 383).